Here is a 473-residue protein sequence, read N- to C-terminus: H(+)/Cl(-) exchange transporter ClcA (473 aa).

Residues 1–32 are Cytoplasmic-facing; the sequence is MKTDNSTFLAQQIVRLRRRDQIRRLMQRDKTP. A helical transmembrane segment spans residues 33 to 69; that stretch reads LAILFMAAVVGTLTGLVGVAFEKAVSWVQNMRIGALV. Topologically, residues 70–76 are periplasmic; sequence QVADHAF. The chain crosses the membrane as a helical span at residues 77 to 100; it reads LLWPLAFILSALLAMVGYFLVRKF. Residues 106-110 carry the Selectivity filter part_1 motif; that stretch reads GSGIP. Residue S107 participates in chloride binding. Residues 109–116 constitute an intramembrane region (helical); that stretch reads IPEIEGAL. Over 117–123 the chain is Cytoplasmic; the sequence is EELRPVR. 2 helical membrane passes run 124 to 141 and 148 to 166; these read WWRVLPVKFIGGMGTLGA and EGPTVQIGGNLGRMVLDVF. The Selectivity filter part_2 motif lies at 146 to 150; it reads GREGP. The Cytoplasmic segment spans residues 167 to 176; the sequence is RMRSAEARHT. 2 consecutive intramembrane regions (helical) follow at residues 177–189 and 193–201; these read LLATGAAAGLSAA and PLAGILFII. Over 202 to 214 the chain is Cytoplasmic; that stretch reads EEMRPQFRYNLIS. Residues 215 to 232 form a helical membrane-spanning segment; it reads IKAVFTGVIMSSIVFRIF. The Periplasmic segment spans residues 233 to 252; sequence NGEAPIIEVGKLSDAPVNTL. Residues 253-281 form a helical membrane-spanning segment; that stretch reads WLYLILGIIFGCVGPVFNSLVLRTQDMFQ. At 282-287 the chain is on the cytoplasmic side; that stretch reads RFHGGE. Residues 288 to 309 form a helical membrane-spanning segment; that stretch reads IKKWVLMGGAIGGLCGILGLIE. The Periplasmic portion of the chain corresponds to 310–329; the sequence is PEAAGGGFNLIPIAAAGNFS. Transmembrane regions (helical) follow at residues 330 to 349 and 355 to 376; these read VGLLLFIFITRVVTTLLCFS and GIFAPMLALGTLLGTAFGMAAA. Positions 355-359 match the Selectivity filter part_3 motif; it reads GIFAP. Positions 356 and 357 each coordinate chloride. Topologically, residues 377-386 are periplasmic; that stretch reads VLFPQYHLEA. Positions 387–401 form an intramembrane region, helical; it reads GTFAIAGMGALMAAS. The segment at residues 402 to 404 is an intramembrane region (note=Loop between two helices); it reads VRA. The segment at residues 405–416 is an intramembrane region (helical); the sequence is PLTGIVLVLEMT. The segment at residues 417-421 is an intramembrane region (note=Loop between two helices); the sequence is DNYQL. The helical transmembrane segment at 422–438 threads the bilayer; that stretch reads ILPMIITCLGATLLAQF. Residues 439–473 are Cytoplasmic-facing; sequence LGGKPLYSTILARTLAKQDAEQAAKNQNAPAGENT. Residue Y445 coordinates chloride.

Belongs to the chloride channel (TC 2.A.49) family. ClcA subfamily. In terms of assembly, homodimer.

Its subcellular location is the cell inner membrane. It carries out the reaction 2 chloride(in) + H(+)(out) = 2 chloride(out) + H(+)(in). Functionally, proton-coupled chloride transporter. Functions as antiport system and exchanges two chloride ions for 1 proton. Probably acts as an electrical shunt for an outwardly-directed proton pump that is linked to amino acid decarboxylation, as part of the extreme acid resistance (XAR) response. The protein is H(+)/Cl(-) exchange transporter ClcA of Salmonella schwarzengrund (strain CVM19633).